A 95-amino-acid polypeptide reads, in one-letter code: Protein FAM240C (95 aa).

Residues 68-95 (KMLQGPGRCPDRVPEATESLHTKDKKAA) are disordered. Positions 76–95 (CPDRVPEATESLHTKDKKAA) are enriched in basic and acidic residues.

It belongs to the FAM240 family.

This is Protein FAM240C (FAM240C) from Homo sapiens (Human).